The sequence spans 130 residues: Small ribosomal subunit protein uS8 (130 aa).

It belongs to the universal ribosomal protein uS8 family. As to quaternary structure, part of the 30S ribosomal subunit.

Functionally, one of the primary rRNA binding proteins, it binds directly to 16S rRNA central domain where it helps coordinate assembly of the platform of the 30S subunit. This Methanococcus aeolicus (strain ATCC BAA-1280 / DSM 17508 / OCM 812 / Nankai-3) protein is Small ribosomal subunit protein uS8.